Consider the following 2057-residue polypeptide: Myosin heavy chain, non-muscle (2057 aa).

The region spanning 78–128 is the Myosin N-terminal SH3-like domain; sequence HRSVLVWVPHENQGFVAASIKREHGDEVEVELAETGKRVMILRDDIQKMNP. The Myosin motor domain occupies 132 to 867; sequence DKVEDMAELT…VLAHLEEERD (736 aa). 225–232 provides a ligand contact to ATP; it reads GESGAGKT. A 25 kDa/50 kDa junction region spans residues 250–260; it reads PKGSGAVPHPA. Positions 722-734 are 50 kDa/20 kDa junction; it reads DTQFGARTRKGMF. The segment at 745–767 is actin-binding; the sequence is LAKLMDTLRNTNPNFVRCIIPNH. The interval 782–798 is reactive sulfhydryl/actin-binding; sequence QLRCNGVLEGIRICRQG. The 30-residue stretch at 870–899 folds into the IQ domain; sequence ISDLIVNFQAFCRGFLARRNYQKRLQQLNA. Residues 926–2016 adopt a coiled-coil conformation; the sequence is KPLLEVTKQE…SLKTKLRRTG (1091 aa). 3 disordered regions span residues 1124–1144, 1782–1802, and 2008–2057; these read EERL…KRKI, SSER…EEIA, and LKTK…DSAN. Residues 1343 to 2010 are alpha-helical tailpiece (LMM); sequence SQIAELQVKL…MNREINSLKT (668 aa). Positions 1343–2057 are light meromyosin (LMM); the sequence is SQIAELQVKL…ESLDGEDSAN (715 aa). Positions 1782–1792 are enriched in basic and acidic residues; sequence SSERARRAAET. A globular tailpiece region spans residues 2011–2057; the sequence is KLRRTGGIGLSSSRLTGTPSSKRAGGGGGSDDSSVQDESLDGEDSAN. 2 positions are modified to phosphoserine: S2021 and S2022. The segment covering 2044 to 2057 has biased composition (acidic residues); that stretch reads SVQDESLDGEDSAN.

It belongs to the TRAFAC class myosin-kinesin ATPase superfamily. Myosin family. Interacts with sau. Interacts with ck and Ubr3. Ubiquitinated. In terms of tissue distribution, in Johnston's organ, expressed in neurons and scolopale cells.

It is found in the cell projection. Its subcellular location is the cilium. It localises to the cytoplasm. Nonmuscle myosin appears to be responsible for cellularization. Required for morphogenesis and cytokinesis. Necessary for auditory transduction: plays a role in Johnston's organ organization by acting in scolopidial apical attachment. Interaction with the myosin ck may be important for this function. Localizes to and defines the trailing edge of cells during larval epidermal wound healing. This process is dependent on the phosphatidylinositol 4-phosphate 5-kinase sktl/skittles. This Drosophila melanogaster (Fruit fly) protein is Myosin heavy chain, non-muscle (zip).